A 291-amino-acid chain; its full sequence is N-acetylmannosamine kinase (291 aa).

Residues 5 to 12 (AIDIGGTK) and 132 to 139 (GVGGGVVS) contribute to the ATP site. 4 residues coordinate Zn(2+): His156, Cys166, Cys168, and Cys173.

This sequence belongs to the ROK (NagC/XylR) family. NanK subfamily. As to quaternary structure, homodimer.

The catalysed reaction is an N-acyl-D-mannosamine + ATP = an N-acyl-D-mannosamine 6-phosphate + ADP + H(+). Its pathway is amino-sugar metabolism; N-acetylneuraminate degradation; D-fructose 6-phosphate from N-acetylneuraminate: step 2/5. Its function is as follows. Catalyzes the phosphorylation of N-acetylmannosamine (ManNAc) to ManNAc-6-P. In Escherichia coli O7:K1 (strain IAI39 / ExPEC), this protein is N-acetylmannosamine kinase.